We begin with the raw amino-acid sequence, 378 residues long: MFKPIRKTHPLISIANNALVDLPAPSNISAWWNFGSLLGLCLMLQILTGLFLAMHYAADIETAFNSVNHICRDVNNGWFLRICHANGASFFFACLFMHVGRGVYYESYLYHMTWNTGVIILFLTMATGFLGYVLPWGQMSFWGATVITNLLSAVPYLGMDLVQWIWGGFAVDNTTLTRFFTFHFIFPFIILALMMIHLLFLHQTGSNNPLGLNSNVDKIPFHPYFIYKDIFGFIVFYWILIRFIWKFNYLLMDPENFIPANPLVTPVHIQPEWYFLFAYAILRSIPNKLGGVIALVLSIAILLILPFTHSSKFRGLQFYPLNQILFWNMVVVASLLTWIGARPVEDPYVLTGQILTVLYFSYFIINPLLAKYWDKLLN.

Transmembrane regions (helical) follow at residues 34-54, 78-99, 114-134, and 179-199; these read FGSL…FLAM, WFLR…FMHV, WNTG…GYVL, and FFTF…IHLL. Heme b-binding residues include histidine 84 and histidine 98. 2 residues coordinate heme b: histidine 183 and histidine 197. Residue histidine 202 coordinates a ubiquinone. 4 consecutive transmembrane segments (helical) span residues 227–247, 289–309, 321–341, and 348–368; these read YKDI…IWKF, LGGV…PFTH, LNQI…WIGA, and YVLT…INPL.

The protein belongs to the cytochrome b family. As to quaternary structure, the main subunits of complex b-c1 are: cytochrome b, cytochrome c1 and the Rieske protein. Heme b serves as cofactor.

It localises to the mitochondrion inner membrane. Functionally, component of the ubiquinol-cytochrome c reductase complex (complex III or cytochrome b-c1 complex) that is part of the mitochondrial respiratory chain. The b-c1 complex mediates electron transfer from ubiquinol to cytochrome c. Contributes to the generation of a proton gradient across the mitochondrial membrane that is then used for ATP synthesis. The polypeptide is Cytochrome b (MT-CYB) (Anopheles quadrimaculatus (Common malaria mosquito)).